Reading from the N-terminus, the 92-residue chain is RIIa domain-containing protein 1 (92 aa).

The RIIa domain occupies 43-77 (KEVEWLISGFFREIFLKRPDNILEFAADYFTDPRL).

This chain is RIIa domain-containing protein 1 (RIIAD1), found in Homo sapiens (Human).